Reading from the N-terminus, the 527-residue chain is Light-independent protochlorophyllide reductase subunit B (527 aa).

Asp36 is a [4Fe-4S] cluster binding site. Asp290 serves as the catalytic Proton donor. 425 to 426 (GL) is a binding site for substrate.

The protein belongs to the ChlB/BchB/BchZ family. As to quaternary structure, protochlorophyllide reductase is composed of three subunits; ChlL, ChlN and ChlB. Forms a heterotetramer of two ChlB and two ChlN subunits. Requires [4Fe-4S] cluster as cofactor.

The enzyme catalyses chlorophyllide a + oxidized 2[4Fe-4S]-[ferredoxin] + 2 ADP + 2 phosphate = protochlorophyllide a + reduced 2[4Fe-4S]-[ferredoxin] + 2 ATP + 2 H2O. The protein operates within porphyrin-containing compound metabolism; chlorophyll biosynthesis (light-independent). Its function is as follows. Component of the dark-operative protochlorophyllide reductase (DPOR) that uses Mg-ATP and reduced ferredoxin to reduce ring D of protochlorophyllide (Pchlide) to form chlorophyllide a (Chlide). This reaction is light-independent. The NB-protein (ChlN-ChlB) is the catalytic component of the complex. This is Light-independent protochlorophyllide reductase subunit B from Synechococcus sp. (strain RCC307).